The chain runs to 622 residues: Apical membrane antigen 1 (622 aa).

An N-terminal signal peptide occupies residues 1-24; the sequence is MRKLYCVLLLSAFEFTYMINFGRG. Topologically, residues 25–546 are extracellular; the sequence is QNYWEHPYQK…EHKPTYDKMK (522 aa). 5 disulfide bridges follow: cysteine 149-cysteine 302, cysteine 217-cysteine 247, cysteine 263-cysteine 275, cysteine 320-cysteine 418, and cysteine 337-cysteine 409. A glycan (N-linked (GlcNAc...) asparagine) is linked at asparagine 162. N-linked (GlcNAc...) asparagine glycans are attached at residues asparagine 286, asparagine 371, asparagine 421, asparagine 422, and asparagine 499. Intrachain disulfides connect cysteine 443–cysteine 502, cysteine 490–cysteine 507, and cysteine 492–cysteine 509. The helical transmembrane segment at 547 to 567 threads the bilayer; that stretch reads IIIASSAAVAVLATILMVYLY. At 568 to 622 the chain is on the cytoplasmic side; it reads KRKGNAEKYDKMDEPQDYGKSNSRNDEMLDPEASFWGEEKRASHTTPVLMEKPYY. The segment at 577 to 607 is disordered; it reads DKMDEPQDYGKSNSRNDEMLDPEASFWGEEK.

This sequence belongs to the apicomplexan parasites AMA1 family.

The protein localises to the membrane. Involved in parasite invasion of erythrocytes. In Plasmodium falciparum (isolate 7G8), this protein is Apical membrane antigen 1 (AMA-1).